The chain runs to 503 residues: 3-octaprenyl-4-hydroxybenzoate carboxy-lyase (503 aa).

Asparagine 176 lines the Mn(2+) pocket. Residues 179–181, 193–195, and 198–199 contribute to the prenylated FMN site; these read IYR, RWL, and RG. Glutamate 242 provides a ligand contact to Mn(2+). Aspartate 303 functions as the Proton donor in the catalytic mechanism.

The protein belongs to the UbiD family. Homohexamer. The cofactor is prenylated FMN. Requires Mn(2+) as cofactor.

Its subcellular location is the cell membrane. It carries out the reaction a 4-hydroxy-3-(all-trans-polyprenyl)benzoate + H(+) = a 2-(all-trans-polyprenyl)phenol + CO2. It functions in the pathway cofactor biosynthesis; ubiquinone biosynthesis. In terms of biological role, catalyzes the decarboxylation of 3-octaprenyl-4-hydroxy benzoate to 2-octaprenylphenol, an intermediate step in ubiquinone biosynthesis. This is 3-octaprenyl-4-hydroxybenzoate carboxy-lyase from Ralstonia pickettii (strain 12J).